The following is a 214-amino-acid chain: Neurogenin-3 (214 aa).

Over residues 1-14 (MTPQPSGAPTVQVT) the composition is skewed to polar residues. Positions 1–98 (MTPQPSGAPT…NDRERNRMHN (98 aa)) are disordered. The segment covering 15–26 (RETERSFPRASE) has biased composition (basic and acidic residues). Composition is skewed to basic residues over residues 57-70 (APRK…GRSR) and 79-88 (KQRRSRRKKA). The bHLH domain occupies 83–135 (SRRKKANDRERNRMHNLNSALDALRGVLPTFPDDAKLTKIETLRFAHNYIWAL).

As to quaternary structure, efficient DNA binding requires dimerization with another bHLH protein. Interacts with ATOH8.

Its subcellular location is the nucleus. Functionally, acts as a transcriptional regulator. Together with NKX2-2, initiates transcriptional activation of NEUROD1. Involved in neurogenesis. Also required for the specification of a common precursor of the 4 pancreatic endocrine cell types. This is Neurogenin-3 (NEUROG3) from Homo sapiens (Human).